A 46-amino-acid chain; its full sequence is Esculentin-1SEb (46 aa).

A disulfide bridge links cysteine 40 with cysteine 46.

Expressed by the skin glands.

It is found in the secreted. In terms of biological role, mast cell degranulating peptide. Causes histamine release from rat peritoneal mast cells in vitro. Has antibacterial activity against the Gram-negative bacterium E.coli K12 and Gram-positive bacterium M.luteus NCT C2665. The sequence is that of Esculentin-1SEb from Lithobates sevosus (Dusky gopher frog).